A 466-amino-acid polypeptide reads, in one-letter code: Purple acid phosphatase 25 (466 aa).

An N-terminal signal peptide occupies residues 1-21; sequence MRMNKILLVFVFLSIATVINS. Asp164 is a binding site for Fe cation. The N-linked (GlcNAc...) asparagine glycan is linked to Asn172. Fe cation-binding residues include Asp192 and Tyr195. Asp192 contributes to the Zn(2+) binding site. Asn229 and His314 together coordinate Zn(2+). A substrate-binding site is contributed by Asn229. Residue His324 is the Proton donor of the active site. His351 serves as a coordination point for Zn(2+). 351 to 353 is a substrate binding site; it reads HVH. His353 provides a ligand contact to Fe cation. Asn367 and Asn424 each carry an N-linked (GlcNAc...) asparagine glycan.

This sequence belongs to the metallophosphoesterase superfamily. Purple acid phosphatase family. As to quaternary structure, homodimer. It depends on Fe cation as a cofactor. Requires Zn(2+) as cofactor. In terms of tissue distribution, specifically expressed in flowers.

It is found in the secreted. The enzyme catalyses a phosphate monoester + H2O = an alcohol + phosphate. This chain is Purple acid phosphatase 25 (PAP25), found in Arabidopsis thaliana (Mouse-ear cress).